A 512-amino-acid polypeptide reads, in one-letter code: D-alanine--D-alanyl carrier protein ligase (512 aa).

152–153 is an ATP binding site; sequence TS. D199 contacts D-alanine. Position 294–299 (294–299) interacts with ATP; that stretch reads NAYGPT. V303 lines the D-alanine pocket. ATP is bound by residues D385, 397-400, and K499; that span reads YGGR. K499 contacts D-alanine.

This sequence belongs to the ATP-dependent AMP-binding enzyme family. DltA subfamily.

The protein localises to the cytoplasm. The catalysed reaction is holo-[D-alanyl-carrier protein] + D-alanine + ATP = D-alanyl-[D-alanyl-carrier protein] + AMP + diphosphate. The protein operates within cell wall biogenesis; lipoteichoic acid biosynthesis. In terms of biological role, catalyzes the first step in the D-alanylation of lipoteichoic acid (LTA), the activation of D-alanine and its transfer onto the D-alanyl carrier protein (Dcp) DltC. In an ATP-dependent two-step reaction, forms a high energy D-alanyl-AMP intermediate, followed by transfer of the D-alanyl residue as a thiol ester to the phosphopantheinyl prosthetic group of the Dcp. D-alanylation of LTA plays an important role in modulating the properties of the cell wall in Gram-positive bacteria, influencing the net charge of the cell wall. This Streptococcus pyogenes serotype M28 (strain MGAS6180) protein is D-alanine--D-alanyl carrier protein ligase.